We begin with the raw amino-acid sequence, 346 residues long: MAELFREVTKEERVLYYKAEWNAKKLPRFLVEKLENREFGFDHTGEGPSDRKNVFMDVRDLEDYIKATAPYAIYSSVALYEDPKGMSGWLGAELVFDIDAKDLPLRRCGHIHEHGKVCPICLGDAKELARDTLVILKEDFGFEDVHVVYSGRGYHIRVLDDWAIQLDSKSREKILAYISAAEEVTFEDIQSRKIMLSSGYFRVFRLRFGYFIARANENHLLNIGLRKGQVKKILESRDEIYEGFVRKGLLTAFPQGIGYKTLARLFALSSTFSKAYFDGRVTVDVKRILRVPSSLHSKVGLVATYIGSDERKLEKFNPFRDAVPKFREEEVKEAYEEWLELHGDEL.

Residues aspartate 97, aspartate 99, and aspartate 278 contribute to the active site.

This sequence belongs to the eukaryotic-type primase small subunit family. In terms of assembly, heterodimer of a small subunit (PriS) and a large subunit (PriL). It depends on Mg(2+) as a cofactor. Mn(2+) is required as a cofactor.

Its function is as follows. Catalytic subunit of DNA primase, an RNA polymerase that catalyzes the synthesis of short RNA molecules used as primers for DNA polymerase during DNA replication. The small subunit contains the primase catalytic core and has DNA synthesis activity on its own. Binding to the large subunit stabilizes and modulates the activity, increasing the rate of DNA synthesis while decreasing the length of the DNA fragments, and conferring RNA synthesis capability. The DNA polymerase activity may enable DNA primase to also catalyze primer extension after primer synthesis. May also play a role in DNA repair. This is DNA primase small subunit PriS from Thermococcus onnurineus (strain NA1).